Consider the following 211-residue polypeptide: MNFVIYGVIVVLTSQLYVDGWGCQMSERGLDKKMKNKILKHHNELRQKVANGQERGQPTASNMKQLRWNDELAANAQRAAERCIFQHTSDEGRKTTKYGVAGESMYAGTFSNPLKTAVDMWYEEVRDVNPSILDSYDYYPGAVIGHYIQLVWAETEAIGCGYAKSAADGESYVFCHYAPHGLFPQQSVYKRGSPASACKKGQSSRYPGLCK.

Positions 1–20 are cleaved as a signal peptide; that stretch reads MNFVIYGVIVVLTSQLYVDG.

Contains 3 disulfide bonds. As to expression, expressed by the venom gland.

It is found in the secreted. In terms of biological role, shows trypsin inhibiting activity. The protein is highly thermally stable, since its incubation in boiling water during 10 minutes does not reduce its activity. The chain is Scoloptoxin SSD43 from Scolopendra dehaani (Thai centipede).